Consider the following 340-residue polypeptide: Heat-inducible transcription repressor HrcA (340 aa).

This sequence belongs to the HrcA family.

Negative regulator of class I heat shock genes (grpE-dnaK-dnaJ and groELS operons). Prevents heat-shock induction of these operons. This chain is Heat-inducible transcription repressor HrcA, found in Clavibacter michiganensis subsp. michiganensis (strain NCPPB 382).